The following is a 282-amino-acid chain: 4-diphosphocytidyl-2-C-methyl-D-erythritol kinase (282 aa).

Lys-9 is an active-site residue. Pro-98–Ser-108 serves as a coordination point for ATP. Asp-140 is an active-site residue.

It belongs to the GHMP kinase family. IspE subfamily. Homodimer.

It carries out the reaction 4-CDP-2-C-methyl-D-erythritol + ATP = 4-CDP-2-C-methyl-D-erythritol 2-phosphate + ADP + H(+). Its pathway is isoprenoid biosynthesis; isopentenyl diphosphate biosynthesis via DXP pathway; isopentenyl diphosphate from 1-deoxy-D-xylulose 5-phosphate: step 3/6. Its function is as follows. Catalyzes the phosphorylation of the position 2 hydroxy group of 4-diphosphocytidyl-2C-methyl-D-erythritol. In Salmonella agona (strain SL483), this protein is 4-diphosphocytidyl-2-C-methyl-D-erythritol kinase.